A 330-amino-acid chain; its full sequence is Glucan endo-1,3-beta-glucosidase GIII (330 aa).

An N-terminal signal peptide occupies residues 1–25 (MARKGVDVAVALVLVALAAFPAVHS). Residue Glu117 is the Proton donor of the active site. The Nucleophile role is filled by Glu255.

Belongs to the glycosyl hydrolase 17 family.

It carries out the reaction Hydrolysis of (1-&gt;3)-beta-D-glucosidic linkages in (1-&gt;3)-beta-D-glucans.. Functionally, may provide a degree of protection against microbial invasion of germinated barley grain through its ability to degrade fungal cell wall polysaccharides. In Hordeum vulgare (Barley), this protein is Glucan endo-1,3-beta-glucosidase GIII.